Here is a 334-residue protein sequence, read N- to C-terminus: Putative transport protein MTH_1211 (334 aa).

8 consecutive transmembrane segments (helical) span residues 24 to 44, 60 to 80, 84 to 104, 131 to 151, 189 to 209, 220 to 240, 255 to 275, and 289 to 309; these read AIVV…AYIV, VSII…LVFT, IINS…PGAG, YVVA…VFLS, VLLS…LMAA, AILL…GPWA, ILRG…DIYL, and MIFL…GFIV.

This sequence belongs to the autoinducer-2 exporter (AI-2E) (TC 2.A.86) family.

It is found in the cell membrane. The polypeptide is Putative transport protein MTH_1211 (Methanothermobacter thermautotrophicus (strain ATCC 29096 / DSM 1053 / JCM 10044 / NBRC 100330 / Delta H) (Methanobacterium thermoautotrophicum)).